The primary structure comprises 573 residues: Diflavin flavoprotein A 1 (573 aa).

A zinc metallo-hydrolase region spans residues 43–236; that stretch reads QNGTTYNSYL…GTISTVANGH (194 aa). Fe cation contacts are provided by histidine 92, glutamate 94, aspartate 96, histidine 159, aspartate 178, and histidine 236. The Flavodoxin-like domain maps to 265-401; sequence VVVFYVADYG…LCDESGTDLG (137 aa). Positions 424 to 573 are flavodoxin-reductase-like; the sequence is IGRISGGLYI…VHHRKVGNYY (150 aa).

This sequence in the N-terminal section; belongs to the zinc metallo-hydrolase group 3 family. In the C-terminal section; belongs to the flavodoxin reductase family. In terms of assembly, homodimer. Fe cation serves as cofactor. It depends on FAD as a cofactor. The cofactor is FMN.

Mediates electron transfer from NADH to oxygen, reducing it to water. This modular protein has 3 redox cofactors, in other organisms the same activity requires 2 or 3 proteins. The protein is Diflavin flavoprotein A 1 (dfa1) of Synechocystis sp. (strain ATCC 27184 / PCC 6803 / Kazusa).